A 466-amino-acid polypeptide reads, in one-letter code: Chromosomal replication initiator protein DnaA (466 aa).

Residues 1–86 are domain I, interacts with DnaA modulators; it reads MSLSLWQQCL…EVGTKPVTQT (86 aa). Positions 86–129 are domain II; it reads TLKTPVHNVVAPTQTTTAQPQRVAPAARSGWDNVPAPAEPTYRS. Residues 130 to 346 are domain III, AAA+ region; that stretch reads NVNVKHTFDN…GALNRVIANA (217 aa). Positions 174, 176, 177, and 178 each coordinate ATP. The segment at 347–466 is domain IV, binds dsDNA; it reads NFTGRAITID…FSNLIRTLSS (120 aa).

The protein belongs to the DnaA family. As to quaternary structure, oligomerizes as a right-handed, spiral filament on DNA at oriC.

The protein resides in the cytoplasm. In terms of biological role, plays an essential role in the initiation and regulation of chromosomal replication. ATP-DnaA binds to the origin of replication (oriC) to initiate formation of the DNA replication initiation complex once per cell cycle. Binds the DnaA box (a 9 base pair repeat at the origin) and separates the double-stranded (ds)DNA. Forms a right-handed helical filament on oriC DNA; dsDNA binds to the exterior of the filament while single-stranded (ss)DNA is stabiized in the filament's interior. The ATP-DnaA-oriC complex binds and stabilizes one strand of the AT-rich DNA unwinding element (DUE), permitting loading of DNA polymerase. After initiation quickly degrades to an ADP-DnaA complex that is not apt for DNA replication. Binds acidic phospholipids. The sequence is that of Chromosomal replication initiator protein DnaA from Salmonella choleraesuis (strain SC-B67).